Consider the following 87-residue polypeptide: NADH dehydrogenase [ubiquinone] 1 alpha subcomplex subunit 4-like 2 (87 aa).

It belongs to the complex I NDUFA4 subunit family.

This is NADH dehydrogenase [ubiquinone] 1 alpha subcomplex subunit 4-like 2 (NDUFA4L2) from Bos taurus (Bovine).